The sequence spans 213 residues: Serine acetyltransferase (213 aa).

It belongs to the transferase hexapeptide repeat family.

The protein localises to the cytoplasm. It catalyses the reaction L-serine + acetyl-CoA = O-acetyl-L-serine + CoA. The protein operates within amino-acid biosynthesis; L-cysteine biosynthesis; L-cysteine from L-serine: step 1/2. This chain is Serine acetyltransferase (cysE), found in Staphylococcus epidermidis (strain ATCC 35984 / DSM 28319 / BCRC 17069 / CCUG 31568 / BM 3577 / RP62A).